A 447-amino-acid polypeptide reads, in one-letter code: Argininosuccinate lyase (447 aa).

It belongs to the lyase 1 family. Argininosuccinate lyase subfamily.

It is found in the cytoplasm. It carries out the reaction 2-(N(omega)-L-arginino)succinate = fumarate + L-arginine. The protein operates within amino-acid biosynthesis; L-arginine biosynthesis; L-arginine from L-ornithine and carbamoyl phosphate: step 3/3. The protein is Argininosuccinate lyase of Bacteroides fragilis (strain YCH46).